The primary structure comprises 122 residues: MKLLTSLVFCSLLLGVCHGGFFSFVHEAFQGAGDMWRAYTDMKEANWKNSDKYFHARGNYDAAQRGPGGVWAAEKISDGREAFQEFFGRGHEDTIADQEANRHGRSGKDPNYYRPPGLPDKY.

Positions 1 to 19 are cleaved as a signal peptide; sequence MKLLTSLVFCSLLLGVCHG. Residues 20 to 45 are important for amyloid formation; it reads GFFSFVHEAFQGAGDMWRAYTDMKEA. Residues 91 to 108 show a composition bias toward basic and acidic residues; that stretch reads HEDTIADQEANRHGRSGK. The tract at residues 91–122 is disordered; the sequence is HEDTIADQEANRHGRSGKDPNYYRPPGLPDKY.

The protein belongs to the SAA family. Homohexamer; dimer of trimers. Can form amyloid fibrils after partial proteolysis; the native, undenatured protein does not form amyloid fibrils (in vitro). Apolipoprotein of the HDL complex. Binds to heparin. As to expression, detected in blood plasma (at protein level). Detected in liver.

It is found in the secreted. In terms of biological role, major acute phase protein. This chain is Serum amyloid A-1 protein (Saa1), found in Mus musculus (Mouse).